The primary structure comprises 351 residues: UDP-3-O-acylglucosamine N-acyltransferase (351 aa).

The Proton acceptor role is filled by His-240.

The protein belongs to the transferase hexapeptide repeat family. LpxD subfamily. In terms of assembly, homotrimer.

The enzyme catalyses a UDP-3-O-[(3R)-3-hydroxyacyl]-alpha-D-glucosamine + a (3R)-hydroxyacyl-[ACP] = a UDP-2-N,3-O-bis[(3R)-3-hydroxyacyl]-alpha-D-glucosamine + holo-[ACP] + H(+). Its pathway is bacterial outer membrane biogenesis; LPS lipid A biosynthesis. In terms of biological role, catalyzes the N-acylation of UDP-3-O-acylglucosamine using 3-hydroxyacyl-ACP as the acyl donor. Is involved in the biosynthesis of lipid A, a phosphorylated glycolipid that anchors the lipopolysaccharide to the outer membrane of the cell. This chain is UDP-3-O-acylglucosamine N-acyltransferase, found in Pseudomonas syringae pv. syringae (strain B728a).